The sequence spans 123 residues: MPPKTSGKAAKKAGKAQKNITKNDKKKKRKRKESYAIYIYKVLKQVHPDTGISSKAMSIMNSFVNDIFERIAAEASRLAHYNKRSTITSREIQTAVRLLLPGELAKHAVSEGTKAVTKYTSSK.

A disordered region spans residues 1–31; that stretch reads MPPKTSGKAAKKAGKAQKNITKNDKKKKRKR. Proline 2 bears the N-methylproline; partial mark. Residue lysine 44 is modified to N6-succinyllysine. The O-linked (GlcNAc) serine glycan is linked to serine 110. Residues lysine 114 and lysine 118 each carry the N6-succinyllysine modification. Lysine 118 participates in a covalent cross-link: Glycyl lysine isopeptide (Lys-Gly) (interchain with G-Cter in ubiquitin).

It belongs to the histone H2B family. The nucleosome is a histone octamer containing two molecules each of H2A, H2B, H3 and H4 assembled in one H3-H4 heterotetramer and two H2A-H2B heterodimers. The octamer wraps approximately 147 bp of DNA. In terms of processing, phosphorylated by the catalytic component of the Dbf4-dependent kinase (DDK) complex Cdc7. Post-translationally, monoubiquitination of Lys-118 by Bre1 gives a specific tag for epigenetic transcriptional activation and is also prerequisite for histone H3 'Lys-4' and 'Lys-79' methylation. Deubiquitination of Lys-118 by the SAGA complex is involved in activating transcription of a large subset of genes. Methylation at Pro-2 increases upon heat shock. In terms of processing, glcNAcylation at Ser-110 promotes monoubiquitination of Lys-118. It fluctuates in response to extracellular glucose, and associates with transcribed genes.

Its subcellular location is the nucleus. It is found in the chromosome. Functionally, core component of nucleosome. Nucleosomes wrap and compact DNA into chromatin, limiting DNA accessibility to the cellular machineries which require DNA as a template. Histones thereby play a central role in transcription regulation, DNA repair, DNA replication and chromosomal stability. DNA accessibility is regulated via a complex set of post-translational modifications of histones, also called histone code, and nucleosome remodeling. The sequence is that of Histone H2B (His2B) from Drosophila sechellia (Fruit fly).